Here is a 482-residue protein sequence, read N- to C-terminus: tRNA sulfurtransferase (482 aa).

Residues 61-165 (LAIRDALTRI…DDRLLLIKGR (105 aa)) enclose the THUMP domain. ATP-binding positions include 183–184 (LI), lysine 265, glycine 287, and glutamine 296. An intrachain disulfide couples cysteine 344 to cysteine 456. The 79-residue stretch at 404 to 482 (FGPNDVILDI…GFANVKVYRP (79 aa)) folds into the Rhodanese domain. Cysteine 456 serves as the catalytic Cysteine persulfide intermediate.

The protein belongs to the ThiI family.

Its subcellular location is the cytoplasm. It carries out the reaction [ThiI sulfur-carrier protein]-S-sulfanyl-L-cysteine + a uridine in tRNA + 2 reduced [2Fe-2S]-[ferredoxin] + ATP + H(+) = [ThiI sulfur-carrier protein]-L-cysteine + a 4-thiouridine in tRNA + 2 oxidized [2Fe-2S]-[ferredoxin] + AMP + diphosphate. The catalysed reaction is [ThiS sulfur-carrier protein]-C-terminal Gly-Gly-AMP + S-sulfanyl-L-cysteinyl-[cysteine desulfurase] + AH2 = [ThiS sulfur-carrier protein]-C-terminal-Gly-aminoethanethioate + L-cysteinyl-[cysteine desulfurase] + A + AMP + 2 H(+). Its pathway is cofactor biosynthesis; thiamine diphosphate biosynthesis. Its function is as follows. Catalyzes the ATP-dependent transfer of a sulfur to tRNA to produce 4-thiouridine in position 8 of tRNAs, which functions as a near-UV photosensor. Also catalyzes the transfer of sulfur to the sulfur carrier protein ThiS, forming ThiS-thiocarboxylate. This is a step in the synthesis of thiazole, in the thiamine biosynthesis pathway. The sulfur is donated as persulfide by IscS. The chain is tRNA sulfurtransferase from Salmonella choleraesuis (strain SC-B67).